Consider the following 733-residue polypeptide: Photosystem I P700 chlorophyll a apoprotein A2 (733 aa).

Helical transmembrane passes span 46-69, 134-157, 174-198, 272-290, 329-352, 368-394, 416-438, and 516-534; these read IFASHFGHLAVIFLWTAGNLFHVA, LYLGSVGLLILASVLLFAGWLHLQ, LNHHLSGLLGVSSLAWTGHIVHVAI, IAHHQLAIAVVFIVAGHMY, LHMQLGLALACLGVATSLTAQHMY, AALYTHHQYIAGFLMVGAFAHGAIFFV, AIISHLSWASLFLGFHTLGLYIH, and FLVHHAIALGLHTTTLILV. Cysteine 558 and cysteine 567 together coordinate [4Fe-4S] cluster. 2 helical membrane-spanning segments follow: residues 574–595 and 642–664; these read AFYLAMFWMLNTIGWVTFYWHW and LSVWAWMFLFGHLIWATGFMFLI. Residues histidine 653, methionine 661, and tyrosine 669 each coordinate chlorophyll a. Residue tryptophan 670 coordinates phylloquinone. A helical transmembrane segment spans residues 706 to 726; sequence LVGLVHFTVGYVLTYAAFVIA.

It belongs to the PsaA/PsaB family. In terms of assembly, the PsaA/B heterodimer binds the P700 chlorophyll special pair and subsequent electron acceptors. PSI consists of a core antenna complex that captures photons, and an electron transfer chain that converts photonic excitation into a charge separation. The eukaryotic PSI reaction center is composed of at least 11 subunits. Requires P700 is a chlorophyll a/chlorophyll a' dimer, A0 is one or more chlorophyll a, A1 is one or both phylloquinones and FX is a shared 4Fe-4S iron-sulfur center. as cofactor.

It localises to the plastid. Its subcellular location is the chloroplast thylakoid membrane. The catalysed reaction is reduced [plastocyanin] + hnu + oxidized [2Fe-2S]-[ferredoxin] = oxidized [plastocyanin] + reduced [2Fe-2S]-[ferredoxin]. PsaA and PsaB bind P700, the primary electron donor of photosystem I (PSI), as well as the electron acceptors A0, A1 and FX. PSI is a plastocyanin/cytochrome c6-ferredoxin oxidoreductase, converting photonic excitation into a charge separation, which transfers an electron from the donor P700 chlorophyll pair to the spectroscopically characterized acceptors A0, A1, FX, FA and FB in turn. Oxidized P700 is reduced on the lumenal side of the thylakoid membrane by plastocyanin or cytochrome c6. This is Photosystem I P700 chlorophyll a apoprotein A2 from Phaeodactylum tricornutum (strain CCAP 1055/1).